The primary structure comprises 288 residues: NAD(P)H-hydrate epimerase (288 aa).

Residues 1–48 constitute a mitochondrion transit peptide; the sequence is MSALRALLGLGLLAAGSRLRRVPGRAGACPAGSAWWEARRPHSGGGGE. The YjeF N-terminal domain occupies 65 to 275; the sequence is AQAVDEELFN…ALEKKYQLNL (211 aa). Position 119–123 (119–123) interacts with (6S)-NADPHX; sequence NNGGD. Asn-120 lines the K(+) pocket. N6-succinyllysine is present on Lys-144. Position 185 (Asp-185) interacts with K(+). Residues 189–195 and Asp-218 contribute to the (6S)-NADPHX site; that span reads GFSFKGD. Ser-221 contacts K(+).

It belongs to the NnrE/AIBP family. Homodimer. Interacts with APOA1 and APOA2. The cofactor is K(+). In terms of processing, undergoes physiological phosphorylation during sperm capacitation, downstream to PKA activation.

The protein localises to the mitochondrion. It localises to the secreted. The catalysed reaction is (6R)-NADHX = (6S)-NADHX. The enzyme catalyses (6R)-NADPHX = (6S)-NADPHX. Catalyzes the epimerization of the S- and R-forms of NAD(P)HX, a damaged form of NAD(P)H that is a result of enzymatic or heat-dependent hydration. This is a prerequisite for the S-specific NAD(P)H-hydrate dehydratase to allow the repair of both epimers of NAD(P)HX. Accelerates cholesterol efflux from endothelial cells to high-density lipoprotein (HDL) and thereby regulates angiogenesis. This Canis lupus familiaris (Dog) protein is NAD(P)H-hydrate epimerase.